The primary structure comprises 884 residues: MDFLKSLPPLQTTDSNSTTAAVNTTTTTATNTATTTATNTATTTTTTTTTNLNNLINESKKKIHRLTQEVVNKISAGEVIQRPSNALKELLENCLDAKSTTITVTVKDGGMKFLQIQDNGSGIRLEDMGIVCERFTTSKLTKFEDLRSIQSFGFRGEALSSISHVSHLKILTKTADSPCAYRACYLNGKLTPPSPNEQSSDPKPCAGVNGTQITVEDLFFNTPSRKNVLKNTVDEHSRIVLLMKKYAINNPTVSFILKKQGDPTPEVHTSGGQNSLEKDVIGSLYGTDLSKELKIITIDPNNPNPNNDDDDNISGSQIKNSNLNRLDFTMKGFFSSTNYNSKKINFILFINGRLVDSKNLKTGLEQVYSKYLPKGTHPFMFIRLLVPPKNIDVNIHPTKSEVKILHEEQIIEFIQQKVDQELSISSNSKTFSTQILLPGFDQDNVSSSQKKQKNSQSSSTQTKSTNNNNNPTSRKEPIEYAKDKIRSDSKSQTLDAFLNPMDYNNNNDSSIDDNDGSGIGRYDDVDGSAGAAGAGGKFNDNLIFNDNSENEAPRDIDNPLSSVTPIKSKEQRQQQSTTTTTTTTTTTATTKSNSPASKNDIKKLQEHTFITPRKTRKYKQVELTSIKTLISEFQSNVHDGLKEFFNDCVFVGCLDHSYALVQFGKKLYLINLENITKELFYQLSLLRFSDFDSIKFSQSLSIYSLLLVSLDSPLSGWMESDGPKDKIADYLTKLLISKKELLNEYFSIEINEDGELVGIPQVLDHYVPCTDNLPIFLLKLATEVEWEFEKECFAGIVKEISSFFKIEPSFLKLRDTQVNNQQQTNSTTTTNNINFIKKDGKEWIIQHLIFPAFRKLSPPKKFANDGSVIQITTLDNLYKVFERC.

4 disordered regions span residues 1-21 (MDFL…TTAA), 297-318 (TIDP…GSQI), 442-522 (QDNV…IGRY), and 544-605 (FNDN…KKLQ). Over residues 446–472 (SSSQKKQKNSQSSSTQTKSTNNNNNPT) the composition is skewed to low complexity. Basic and acidic residues predominate over residues 473–489 (SRKEPIEYAKDKIRSDS). The segment covering 577-590 (TTTTTTTTTTTATT) has biased composition (low complexity).

It belongs to the DNA mismatch repair MutL/HexB family. Heterodimer of mlh1 and pms1 (MutL alpha), and mlh1 and mlh3 (MutL gamma). Forms a ternary complex with MutS alpha (msh2-msh6) or MutS beta (msh2-msh3). Interacts with exo1.

It is found in the nucleus. Heterodimerizes with pms1 to form MutL alpha, a component of the post-replicative DNA mismatch repair system (MMR). DNA repair is initiated by MutS alpha (msh2-msh6) or MutS beta (msh2-msh3) binding to a dsDNA mismatch, then MutL alpha is recruited to the heteroduplex. Assembly of the MutL-MutS-heteroduplex ternary complex in presence of rfc and pcna is sufficient to activate endonuclease activity of pms1. It introduces single-strand breaks near the mismatch and thus generates new entry points for the exonuclease exo1 to degrade the strand containing the mismatch. The polypeptide is DNA mismatch repair protein Mlh1 (mlh1) (Dictyostelium discoideum (Social amoeba)).